The following is a 561-amino-acid chain: Mercuric reductase (561 aa).

The HMA domain maps to 2–65; that stretch reads THLKITGMTC…AVAGLGYKAT (64 aa). A metal cation-binding residues include Cys11 and Cys14. Residues Ala110, Gly130, and Thr135 each coordinate FAD. The cysteines at positions 136 and 141 are disulfide-linked. Lys145, Ala211, Asp403, and Val411 together coordinate FAD. 2 residues coordinate Hg(2+): Cys558 and Cys559.

The protein belongs to the class-I pyridine nucleotide-disulfide oxidoreductase family. In terms of assembly, homodimer. FAD is required as a cofactor.

It carries out the reaction Hg + NADP(+) + H(+) = Hg(2+) + NADPH. Functionally, resistance to Hg(2+) in bacteria appears to be governed by a specialized system which includes mercuric reductase. MerA protein is responsible for volatilizing mercury as Hg(0). Plays a pivotal role in mercury resistance under thiol-depleted conditions and cell protection. Protects cells under thiol-depleted conditions. This chain is Mercuric reductase (merA), found in Pseudomonas aeruginosa.